Consider the following 303-residue polypeptide: Hemolysin E (303 aa).

C87 and C285 form a disulfide bridge. Residues 179–199 (AGAAAGIVAGPFGLIISYSIA) form a helical membrane-spanning segment.

The protein belongs to the hemolysin E family. In terms of assembly, monomer and oligomer. In periplasm, it is present as a monomer, while in outer membrane vesicles, it oligomerizes to form a pore structure that is active. The pore is formed by a dodecamer. In periplasm, it forms a disulfide bond, which prevents the oligomerization. In outer membrane vesicles, the redox status prevents formation of the disulfide bond, leading to oligomerization and pore formation.

The protein localises to the secreted. The protein resides in the periplasm. It localises to the host cell membrane. In terms of biological role, toxin, which has some hemolytic activity towards mammalian cells. Acts by forming a pore-like structure upon contact with mammalian cells. This is Hemolysin E (hlyE) from Salmonella paratyphi A (strain ATCC 9150 / SARB42).